The primary structure comprises 61 residues: Potassium channel toxin alpha-KTx 15.6 (61 aa).

The signal sequence occupies residues 1-23; it reads MKAFYGMLVIFILCSTCYISVDS. Position 24 is a pyrrolidone carboxylic acid (Q24). 3 disulfides stabilise this stretch: C31–C52, C37–C57, and C41–C59.

This sequence belongs to the short scorpion toxin superfamily. Potassium channel inhibitor family. Alpha-KTx 15 subfamily. As to expression, expressed by the venom gland.

The protein resides in the secreted. Its function is as follows. Irreversibly blocks the A-type voltage-gated potassium channels in rat cerebellum granular cells (190 nM induce 50% inhibitory effect) (IC(50)=190 nM). Also weakly inhibits Kv1.2/KCNA2 and Kv1.3/KCNA3. This is Potassium channel toxin alpha-KTx 15.6 from Tityus discrepans (Venezuelan scorpion).